The following is a 72-amino-acid chain: MSAIFNFQSLLIVILLLICTCAYLRALVPNLLDKNKTGILGIFWKCARIGERKSPYVAVCCVVMAFSILFMQ.

The signal sequence occupies residues 1 to 26 (MSAIFNFQSLLIVILLLICTCAYLRA). At 27–53 (LVPNLLDKNKTGILGIFWKCARIGERK) the chain is on the extracellular side. Asn-35 carries an N-linked (GlcNAc...) asparagine glycan. Residues 54–71 (SPYVAVCCVVMAFSILFM) form a helical membrane-spanning segment. A topological domain (cytoplasmic) is located at residue Gln-72.

Belongs to the KISH family.

It localises to the golgi apparatus membrane. Its function is as follows. Involved in the early part of the secretory pathway. This chain is Protein kish-A (tmem167a), found in Xenopus tropicalis (Western clawed frog).